A 240-amino-acid polypeptide reads, in one-letter code: CRISPR system aCascade subunit Cas5 1 (240 aa).

It belongs to the CRISPR-associated protein Cas5 family. Subtype I-A/Apern subfamily. As to quaternary structure, part of the aCascade ribonucleoprotein complex, minimally composed of Csa2 and Cas5a, which binds crRNA. Other possible components of aCascade in strain P1 are Cas6b (SSO1437) and Csa5 (SSO1443), while SSO1399, Cas5b (SSO1400) and SSO1401 have sometimes been seen weakly associated. Csa2 is probably the major RNA-binding subunit. The Csa2-Cas5a-crRNA complex also binds target DNA homologous to crRNA, probably forming an R-loop. Purified aCascade forms a filament about 6 nm in width.

In terms of biological role, CRISPR (clustered regularly interspaced short palindromic repeat) is an adaptive immune system that provides protection against mobile genetic elements (viruses, transposable elements and conjugative plasmids). CRISPR clusters contain spacers, sequences complementary to antecedent mobile elements, and target invading nucleic acids. CRISPR clusters are transcribed and processed into CRISPR RNA (crRNA). The sequence is that of CRISPR system aCascade subunit Cas5 1 (cas5a) from Saccharolobus solfataricus (strain ATCC 35092 / DSM 1617 / JCM 11322 / P2) (Sulfolobus solfataricus).